A 469-amino-acid polypeptide reads, in one-letter code: 3-isopropylmalate dehydratase large subunit (469 aa).

3 residues coordinate [4Fe-4S] cluster: Cys-350, Cys-410, and Cys-413.

Belongs to the aconitase/IPM isomerase family. LeuC type 1 subfamily. Heterodimer of LeuC and LeuD. Requires [4Fe-4S] cluster as cofactor.

The catalysed reaction is (2R,3S)-3-isopropylmalate = (2S)-2-isopropylmalate. It functions in the pathway amino-acid biosynthesis; L-leucine biosynthesis; L-leucine from 3-methyl-2-oxobutanoate: step 2/4. Functionally, catalyzes the isomerization between 2-isopropylmalate and 3-isopropylmalate, via the formation of 2-isopropylmaleate. The sequence is that of 3-isopropylmalate dehydratase large subunit from Rhizobium etli (strain ATCC 51251 / DSM 11541 / JCM 21823 / NBRC 15573 / CFN 42).